Here is a 268-residue protein sequence, read N- to C-terminus: UPF0328 protein ECU03_0040 (268 aa).

Belongs to the UPF0328 family.

In Encephalitozoon cuniculi (strain GB-M1) (Microsporidian parasite), this protein is UPF0328 protein ECU03_0040.